The chain runs to 88 residues: Large ribosomal subunit protein bL27 (88 aa).

Positions 1-21 (MAHKKGTGSTRNGRDSNAKRL) are disordered.

The protein belongs to the bacterial ribosomal protein bL27 family.

In Parasynechococcus marenigrum (strain WH8102), this protein is Large ribosomal subunit protein bL27.